Here is a 770-residue protein sequence, read N- to C-terminus: MLKLSFRSLTSRLPRLSTLVVRGYASVANTGIEASNTSENNLNIQEQLNDNDKKRLKQIRNIGISAHIDSGKTTFTERVLYYTGRIKDIHEVRGKDNVGAKMDFMELEREKGITIQSAATHCTWERTVDQIEANEKQKTDFEKSYNINIIDTPGHIDFTIEVERALRVLDGAVLVLCAVSGVQSQTITVDRQMRRYNVPRISFVNKMDRMGADPWKVIQQINTKLKIPAAAVQIPIGQEDKLEGVVDLIQMRAIYNRGSKGEKIEISQQVPENLIELAKEKRSALIEKLADLDEEIADIYVMEEDPTPEQLMGAIRRTTLARKFTPVLMGSALSNVGVQSVLDAVCDYLPNPSEVENIALNAADSEKPVSLVPSSEKPLVALAFKLEEGRFGQLTYLRIYQGTLKRGNYIYNVNSTKKIKVSRLVRMHSNDMEEIEKVEAGGICALFGIECASGDTFTDGSVSYTMTSMFVPEPVISLSLKPKSKDTTSFSKALNRFQREDPTFRVQLDNESKETIISGMGELHLEVYVERMRREYKVDCETGKPRVAFRETLSKKVPFSYLHKKQSGGAGQYAKVEGYIEYMDGVEDESGNVVDCEFINKVTGGTVPTQYIPACEKAFYEALKKGFLIGHPIKNCRFVLEDGAYHPVDSSELAFRLATISAFRTAFLQANPMVLEPIMNVSITAPVEHQGGVIGNLDKRKATIVDSDTDEDEFTLQAEVPLNSMFSYSSDIRALTKGKGEFSMEFLKYLPAPKYVQKELVDAYNKQQQK.

A mitochondrion-targeting transit peptide spans 1–24 (MLKLSFRSLTSRLPRLSTLVVRGY). The tr-type G domain occupies 57–353 (KQIRNIGISA…AVCDYLPNPS (297 aa)). GTP is bound by residues 66–73 (AHIDSGKT), 151–155 (DTPGH), and 205–208 (NKMD).

It belongs to the TRAFAC class translation factor GTPase superfamily. Classic translation factor GTPase family. EF-G/EF-2 subfamily.

Its subcellular location is the mitochondrion. It participates in protein biosynthesis; polypeptide chain elongation. Functionally, mitochondrial GTPase that catalyzes the GTP-dependent ribosomal translocation step during translation elongation. During this step, the ribosome changes from the pre-translocational (PRE) to the post-translocational (POST) state as the newly formed A-site-bound peptidyl-tRNA and P-site-bound deacylated tRNA move to the P and E sites, respectively. Catalyzes the coordinated movement of the two tRNA molecules, the mRNA and conformational changes in the ribosome. The sequence is that of Elongation factor G, mitochondrial (mef1) from Schizosaccharomyces pombe (strain 972 / ATCC 24843) (Fission yeast).